The chain runs to 813 residues: Fibroblast growth factor receptor 2 (813 aa).

An N-terminal signal peptide occupies residues 1–14 (MLLLALLAFLLVSR). Residues 18–367 (RPSYSMVDDT…EDNPVPYYME (350 aa)) are Extracellular-facing. Residues 21 to 117 (YSMVDDTTPE…NSHFFHVNVT (97 aa)) form the Ig-like C2-type 1 domain. The cysteines at positions 58 and 103 are disulfide-linked. Residues asparagine 79 and asparagine 115 are each glycosylated (N-linked (GlcNAc...) asparagine). The segment at 119 to 143 (ASSSGDDEDDNDGSEDFTNDNNNIR) is disordered. Acidic residues predominate over residues 123–136 (GDDEDDNDGSEDFT). Ig-like C2-type domains are found at residues 145–237 (PYWT…YHLD) and 246–348 (PILQ…AWLT). Residues 152–169 (KMEKKLHAVSAANTVKLR) form a heparin-binding region. Cysteine 170 and cysteine 221 are disulfide-bonded. N-linked (GlcNAc...) asparagine glycosylation is found at asparagine 231, asparagine 255, asparagine 287, asparagine 308, and asparagine 321. Cysteines 268 and 332 form a disulfide. The chain crosses the membrane as a helical span at residues 368-388 (IGIYSTGIFIIFCMVVVCVVC). Residues 389–813 (RMRQGAKKKK…FQHVNGVVKT (425 aa)) lie on the Cytoplasmic side of the membrane. Tyrosine 456 carries the phosphotyrosine; by autocatalysis modification. In terms of domain architecture, Protein kinase spans 471–760 (LTLGKPLGEG…LTLTTNEEYL (290 aa)). Residues 477 to 485 (LGEGCFGQV), lysine 507, 555 to 557 (EYA), and asparagine 561 each bind ATP. The residue at position 576 (tyrosine 576) is a Phosphotyrosine; by autocatalysis. The active-site Proton acceptor is aspartate 616. Phosphotyrosine; by autocatalysis occurs at positions 646, 647, and 759. The span at 771–792 (PSFPDSSCSASSSSGDDSVFSP) shows a compositional bias: low complexity. A disordered region spans residues 771-801 (PSFPDSSCSASSSSGDDSVFSPDPMPHDPCL).

It belongs to the protein kinase superfamily. Tyr protein kinase family. Fibroblast growth factor receptor subfamily. Monomer. Homodimer after ligand binding. In terms of processing, autophosphorylated. Binding of FGF family members together with heparan sulfate proteoglycan or heparin promotes receptor dimerization and autophosphorylation on tyrosine residues. Autophosphorylation occurs in trans between the two FGFR molecules present in the dimer. Post-translationally, N-glycosylated in the endoplasmic reticulum. The N-glycan chains undergo further maturation to an Endo H-resistant form in the Golgi apparatus. Ubiquitinated. FGFR2 is rapidly ubiquitinated after autophosphorylation, leading to internalization and degradation. Subject to degradation both in lysosomes and by the proteasome. In terms of tissue distribution, expressed in the anterior neural plate in early neurula stage embryos. Later in development, the protein is also expressed in the eye anlagen, midbrain-hindbrain boundary and otic vesicle.

Its subcellular location is the cell membrane. It is found in the golgi apparatus. The protein resides in the cytoplasmic vesicle. The enzyme catalyses L-tyrosyl-[protein] + ATP = O-phospho-L-tyrosyl-[protein] + ADP + H(+). With respect to regulation, present in an inactive conformation in the absence of bound ligand. Ligand binding leads to dimerization and activation by autophosphorylation on tyrosine residues. In terms of biological role, tyrosine-protein kinase that acts as a cell-surface receptor for fibroblast growth factors and plays an essential role in the regulation of cell proliferation, differentiation, migration and apoptosis, and in the regulation of embryonic development. Required for normal embryonic patterning, limb bud development, lung morphogenesis, osteogenesis and skin development. Plays an essential role in the regulation of osteoblast differentiation, proliferation and apoptosis, and is required for normal skeleton development. Promotes cell proliferation in keratinocytes and immature osteoblasts, but promotes apoptosis in differentiated osteoblasts. Phosphorylates PLCG1, FRS2 and PAK4. Ligand binding leads to the activation of several signaling cascades. Activation of PLCG1 leads to the production of the cellular signaling molecules diacylglycerol and inositol 1,4,5-trisphosphate. Phosphorylation of FRS2 triggers recruitment of GRB2, GAB1, PIK3R1 and SOS1, and mediates activation of RAS, MAPK1/ERK2, MAPK3/ERK1 and the MAP kinase signaling pathway, as well as of the AKT1 signaling pathway. FGFR2 signaling is down-regulated by ubiquitination, internalization and degradation. Mutations that lead to constitutive kinase activation or impair normal FGFR2 maturation, internalization and degradation lead to aberrant signaling. Over-expressed FGFR2 promotes activation of STAT1. In Xenopus laevis (African clawed frog), this protein is Fibroblast growth factor receptor 2 (fgfr2).